The chain runs to 415 residues: Imidazolonepropionase (415 aa).

Residues His-80 and His-82 each contribute to the Fe(3+) site. Residues His-80 and His-82 each coordinate Zn(2+). Residues Arg-89, Tyr-152, and His-185 each coordinate 4-imidazolone-5-propanoate. Residue Tyr-152 coordinates N-formimidoyl-L-glutamate. His-250 lines the Fe(3+) pocket. Residue His-250 coordinates Zn(2+). A 4-imidazolone-5-propanoate-binding site is contributed by Gln-253. Asp-325 is a binding site for Fe(3+). Asp-325 is a Zn(2+) binding site. Asn-327 and Gly-329 together coordinate N-formimidoyl-L-glutamate. Thr-330 serves as a coordination point for 4-imidazolone-5-propanoate.

Belongs to the metallo-dependent hydrolases superfamily. HutI family. Zn(2+) is required as a cofactor. Requires Fe(3+) as cofactor.

The protein resides in the cytoplasm. It carries out the reaction 4-imidazolone-5-propanoate + H2O = N-formimidoyl-L-glutamate. It participates in amino-acid degradation; L-histidine degradation into L-glutamate; N-formimidoyl-L-glutamate from L-histidine: step 3/3. In terms of biological role, catalyzes the hydrolytic cleavage of the carbon-nitrogen bond in imidazolone-5-propanoate to yield N-formimidoyl-L-glutamate. It is the third step in the universal histidine degradation pathway. The polypeptide is Imidazolonepropionase (Rhizobium meliloti (strain 1021) (Ensifer meliloti)).